The primary structure comprises 433 residues: Histidinol dehydrogenase (433 aa).

Tyrosine 133, glutamine 194, and asparagine 217 together coordinate NAD(+). Substrate is bound by residues serine 240, glutamine 262, and histidine 265. The Zn(2+) site is built by glutamine 262 and histidine 265. Catalysis depends on proton acceptor residues glutamate 330 and histidine 331. Substrate contacts are provided by histidine 331, aspartate 364, glutamate 418, and histidine 423. Position 364 (aspartate 364) interacts with Zn(2+). Histidine 423 is a binding site for Zn(2+).

It belongs to the histidinol dehydrogenase family. The cofactor is Zn(2+).

It carries out the reaction L-histidinol + 2 NAD(+) + H2O = L-histidine + 2 NADH + 3 H(+). It participates in amino-acid biosynthesis; L-histidine biosynthesis; L-histidine from 5-phospho-alpha-D-ribose 1-diphosphate: step 9/9. Its function is as follows. Catalyzes the sequential NAD-dependent oxidations of L-histidinol to L-histidinaldehyde and then to L-histidine. In Dechloromonas aromatica (strain RCB), this protein is Histidinol dehydrogenase.